The chain runs to 276 residues: Light-independent protochlorophyllide reductase iron-sulfur ATP-binding protein (276 aa).

ATP contacts are provided by residues Gly12–Thr17 and Lys41. Ser16 contributes to the Mg(2+) binding site. The [4Fe-4S] cluster site is built by Cys97 and Cys131. Asn182–Arg183 serves as a coordination point for ATP.

It belongs to the NifH/BchL/ChlL family. Homodimer. Protochlorophyllide reductase is composed of three subunits; BchL, BchN and BchB. [4Fe-4S] cluster serves as cofactor.

It carries out the reaction chlorophyllide a + oxidized 2[4Fe-4S]-[ferredoxin] + 2 ADP + 2 phosphate = protochlorophyllide a + reduced 2[4Fe-4S]-[ferredoxin] + 2 ATP + 2 H2O. Its pathway is porphyrin-containing compound metabolism; bacteriochlorophyll biosynthesis (light-independent). Functionally, component of the dark-operative protochlorophyllide reductase (DPOR) that uses Mg-ATP and reduced ferredoxin to reduce ring D of protochlorophyllide (Pchlide) to form chlorophyllide a (Chlide). This reaction is light-independent. The L component serves as a unique electron donor to the NB-component of the complex, and binds Mg-ATP. The chain is Light-independent protochlorophyllide reductase iron-sulfur ATP-binding protein from Chlorobaculum tepidum (strain ATCC 49652 / DSM 12025 / NBRC 103806 / TLS) (Chlorobium tepidum).